The sequence spans 430 residues: Cholecystokinin receptor type A (430 aa).

The Extracellular portion of the chain corresponds to 1-41 (MDVVDSLFVNGSNITSACELGFENETLFCLDRPRPSKEWQP). N-linked (GlcNAc...) asparagine glycans are attached at residues N10, N13, and N24. The cysteines at positions 18 and 29 are disulfide-linked. The chain crosses the membrane as a helical span at residues 42–67 (AVQILLYSLIFLLSVLGNTLVITVLI). At 68–77 (RNKRMRTVTN) the chain is on the cytoplasmic side. A helical membrane pass occupies residues 78-104 (IFLLSLAVSDLMLCLFCMPFNLIPSLL). Topologically, residues 105–115 (KDFIFGSAVCK) are extracellular. C114 and C196 are disulfide-bonded. Residues 116–137 (TTTYFMGTSVSVSTFNLVAISL) traverse the membrane as a helical segment. Residues 138–157 (ERYGAICKPLQSRVWQTKSH) lie on the Cytoplasmic side of the membrane. The helical transmembrane segment at 158–178 (ALKVIAATWCLSFTIMTPYPI) threads the bilayer. Over 179–210 (YSNLVPFTKNNNQTGNMCRFLLPNDVMQQTWH) the chain is Extracellular. A glycan (N-linked (GlcNAc...) asparagine) is linked at N190. The chain crosses the membrane as a helical span at residues 211–234 (TFLLLILFLIPGIVMMVAYGLISL). The Cytoplasmic segment spans residues 235–315 (ELYQGIKFDA…NLMAKKRVIR (81 aa)). The chain crosses the membrane as a helical span at residues 316–336 (MLIVIVVLFFLCWMPIFSANA). At 337–351 (WRAYDTVSAERHLSG) the chain is on the extracellular side. The helical transmembrane segment at 352–375 (TPISFILLLSYTSSCVNPIIYCFM) threads the bilayer. The Cytoplasmic segment spans residues 376-430 (NKRFRLGFMATFPCCPNPGTPGVRGEMGEEEEGRTTGASLSRYSYSHMSTSAPPP). The S-palmitoyl cysteine moiety is linked to residue C389. Residues 396–430 (PGVRGEMGEEEEGRTTGASLSRYSYSHMSTSAPPP) are disordered. A compositionally biased stretch (polar residues) spans 413–430 (ASLSRYSYSHMSTSAPPP).

Belongs to the G-protein coupled receptor 1 family.

It localises to the cell membrane. Functionally, receptor for cholecystokinin. Mediates pancreatic growth and enzyme secretion, smooth muscle contraction of the gall bladder and stomach. Has a 1000-fold higher affinity for CCK rather than for gastrin. It modulates feeding and dopamine-induced behavior in the central and peripheral nervous system. This receptor mediates its action by association with G proteins that activate a phosphatidylinositol-calcium second messenger system. In Cavia porcellus (Guinea pig), this protein is Cholecystokinin receptor type A (CCKAR).